The primary structure comprises 419 residues: MNHTIISLALIFFQLTTTALVVGFTSREHLFLRAIGSVPQGFSAYHQIVFLCSHISNPVNRAFLGAASVFLVILYVDAAILSRWTFASQSPTSSLGGLIPPTTRDTPKTQNNATTAETSASFLRKLSFGFLIALQSRFPATPWAVPRLPPFHKADPKHTPTKSAFLLKNTTKCLVYLLLLRATSGLGNPDDNPVVFASDRIPLFSRLGDKGPGGITLSEIGTRVGAVMGYWAIQYAVIDLLYSLLAVVAVSLHLTDVKGWVPVFGSVSDARGVRLFWGQFYHQLVRQGCSSIAHYITYFILRFRKDSGSLAARYVFMTLVFAVSGVFHTLSDVSQGIPLGESGAMRFFVLQAIGIMLEDGFQAIVSRRRQSGHHGRGKLERVLGSVSGPVWLVTWLTWTSPGWIYMSLQRDRGVPIIPF.

The N-linked (GlcNAc...) asparagine glycan is linked to asparagine 2. 2 helical membrane passes run 4-24 and 62-82; these read TIISLALIFFQLTTTALVVGF and AFLGAASVFLVILYVDAAILS. Positions 89-114 are disordered; it reads QSPTSSLGGLIPPTTRDTPKTQNNAT. 2 N-linked (GlcNAc...) asparagine glycosylation sites follow: asparagine 112 and asparagine 169. 4 helical membrane passes run 230–250, 314–334, 337–357, and 386–406; these read YWAIQYAVIDLLYSLLAVVAV, YVFMTLVFAVSGVFHTLSDVS, IPLGESGAMRFFVLQAIGIML, and VSGPVWLVTWLTWTSPGWIYM.

This sequence belongs to the wax synthase family.

The protein localises to the membrane. The catalysed reaction is 3-O-(beta-D-glucopyranosyl)-2alpha-hydroxyisomotiol + acetyl-CoA = 3-O-(beta-D-glucopyranosyl)-2alpha-acetoxyisomotiol + CoA. The enzyme catalyses 2-deacetylfuscoatroside + acetyl-CoA = fuscoatroside + CoA. It functions in the pathway secondary metabolite biosynthesis; terpenoid biosynthesis. Terpene cyclase-glycosyl transferase fusion protein; part of the gene cluster that mediates the biosynthesis of the enfumafungin-type antibiotic, fuscoatroside. Within the pathway, fsoF catalyzes the acetylation of C2-alpha-OH following the C2 hydroxylation by the cytochrome monooxygenase fsoD. The fuscoatroside biosynthesis is initiated by the cyclization of 2,3(S)-oxidosqualene through FsoA's terpene cyclase (TC) domain, leading to the formation of the fernane skeleton isomotiol, harboring a fernane triterpene skeleton with a C8-C9 double bond. Subsequently, C2-alpha-hydroxylation mediated by fsoD results in the production of 2-alpha-hydroxy-isomotiol, which is further acetylated by fsoF. The glycosyltransferase (GT) domain of FsoA may convert isomotiol, 2-alpha-hydroxy-isomotiol, and the acetylated derivative of 2-alpha-hydroxy-isomotiol into their corresponding glycosides 3-O-(beta-D-glucopyranosyl)-isomotiol, 3-O-(beta-D-glucopyranosyl)-2-alpha-hydroxy-isomotiol, and 3-O-(beta-D-glucopyranosyl)-2-alpha-acetoxy-isomotiol, which then undergo oxidative cleavage under the action of fsoE to form s 2-deacetoxy-fuscoatroside, 2-deacetyl-fuscoatroside, and fuscoatroside, respectively. Although hydroxylation followed by acetylation of 3-O-(beta-D-glucopyranosyl)-isomotiol and 2-deacetoxy-fuscoatroside by fsoD and fsoF could not be ruled out, this process is likely to occur with difficulty due to bulky steric hindrance caused by the presence of a glycan at C3 in these compounds. Interestingly, fsoE can also utilize the aglycones isomotiol and 2-alpha-hydroxy-isomotiol as substrates to generate 19-beta-hydroxy-isomotiol and 2-alpha,19-beta-dihydroxy-isomotiol, respectively. These reactions occur with lower efficiency. Finally, fsoE can further convert 2-alpha,19-beta-dihydroxy-isomotiol into 2-alpha-hydroxy-ismotiol-19-one and 2-alpha-hydroxy-ismotiol-19-one into 2-deacetyl-3-deglucopyranosyl-fuscoatroside. This Humicola fuscoatra protein is Acetyltransferase fsoF.